Reading from the N-terminus, the 812-residue chain is MGNYGTNIDRKWQNKWEDSNLYHFDTNNLDKKLYVLEMFSYPSGSNLHAGHWFNYGPSDSWARFKRMQGFNVFQPMGFDSFGLPAENYAIKTGVHPKDSTMKNIETMTKQLKSMGAMFHWDNEVITSEPEYYKWTQWMFLQLYKNNLAYRKNAPVNWCPSCNTVLANEQVLDGACERCSSDVIKKDLTQWFFKITDYAEELLEKLDDLDWPENTKSMQKHWIGKSIGAQLTFKIVDSDLSFDIFTTRADTLFGVTYAVLAPENPLVDKITKEDHKAEIEAYKEQAKKQSEIERQSITREKTGVFTGSYAINPINGKKVPVWVGDYVLSTYGTGAVMAVPAHDERDFEFAKKHNLPIEKVIEGGETLPYTEDGIMINSEEFNGLESSKGRSAVVEKLEKENLGVKKINYRLRDWLVSRQRYWGAPIPIVYCDKCGTVAVPEEQLPVKLPYDVEFTPDGKSPLSKCDSFVNTTCPTCGGPAKREVDTLDTFVCSSWYFLRYADNKNSEKAFDPKIINEILPVDKYVGGPEHACMHLLYARFFTKALRDMGYLNFDEPFSSLTHQGLILGPDGLKMSKSKGNTISPDDYIDEFGSDVFRMYLMFGFDYTEGGAWSDEGIKSVSRFVDRVERTLASCRYYINNPSDDKITIDNNEKDLNFVRHNSIKSITEDAEKMQFNTCIARLMEYTNALSKYINEDNKNSKFLKECVEDFIILIAPFAPHFSEEQWELLGMTYSVFNEKWPQFDSKALVKDEIEIAVQVNGKIRDRITIASGLDEESIKETALNSEDVKKYTDGKNIVKIIIIKGRLVNIVVK.

The 'HIGH' region motif lies at 40-51; the sequence is SYPSGSNLHAGH. Residues 572–576 carry the 'KMSKS' region motif; that stretch reads KMSKS. An ATP-binding site is contributed by lysine 575.

This sequence belongs to the class-I aminoacyl-tRNA synthetase family.

The protein localises to the cytoplasm. The catalysed reaction is tRNA(Leu) + L-leucine + ATP = L-leucyl-tRNA(Leu) + AMP + diphosphate. In Clostridium tetani (strain Massachusetts / E88), this protein is Leucine--tRNA ligase.